Consider the following 572-residue polypeptide: Probable lysosomal cobalamin transporter (572 aa).

A run of 9 helical transmembrane segments spans residues V8–I28, F40–P60, I95–A115, T145–M165, A188–T208, G314–V334, I374–V394, A421–G441, and V499–A519. The interval G522–R544 is disordered.

This sequence belongs to the LIMR family. LMBRD1 subfamily.

The protein localises to the lysosome membrane. In terms of biological role, probable lysosomal cobalamin transporter. Required to export cobalamin from lysosomes allowing its conversion to cofactors. The protein is Probable lysosomal cobalamin transporter of Aspergillus fumigatus (strain ATCC MYA-4609 / CBS 101355 / FGSC A1100 / Af293) (Neosartorya fumigata).